Consider the following 103-residue polypeptide: Large ribosomal subunit protein uL24 (103 aa).

This sequence belongs to the universal ribosomal protein uL24 family. In terms of assembly, part of the 50S ribosomal subunit.

In terms of biological role, one of two assembly initiator proteins, it binds directly to the 5'-end of the 23S rRNA, where it nucleates assembly of the 50S subunit. One of the proteins that surrounds the polypeptide exit tunnel on the outside of the subunit. The protein is Large ribosomal subunit protein uL24 of Geobacillus sp. (strain WCH70).